The primary structure comprises 79 residues: Small ribosomal subunit protein bS18B (79 aa).

Belongs to the bacterial ribosomal protein bS18 family. Part of the 30S ribosomal subunit. Forms a tight heterodimer with protein bS6.

Its function is as follows. Binds as a heterodimer with protein bS6 to the central domain of the 16S rRNA, where it helps stabilize the platform of the 30S subunit. The chain is Small ribosomal subunit protein bS18B from Saccharopolyspora erythraea (strain ATCC 11635 / DSM 40517 / JCM 4748 / NBRC 13426 / NCIMB 8594 / NRRL 2338).